The primary structure comprises 270 residues: Diaminopimelate epimerase (270 aa).

Substrate contacts are provided by Asn15, Gln49, and Asn66. Cys75 serves as the catalytic Proton donor. Residues 76–77 (GN), Asn155, Asn187, and 204–205 (ER) contribute to the substrate site. Cys213 functions as the Proton acceptor in the catalytic mechanism. 214-215 (GS) serves as a coordination point for substrate.

Belongs to the diaminopimelate epimerase family. Homodimer.

The protein localises to the cytoplasm. It catalyses the reaction (2S,6S)-2,6-diaminopimelate = meso-2,6-diaminopimelate. The protein operates within amino-acid biosynthesis; L-lysine biosynthesis via DAP pathway; DL-2,6-diaminopimelate from LL-2,6-diaminopimelate: step 1/1. Catalyzes the stereoinversion of LL-2,6-diaminopimelate (L,L-DAP) to meso-diaminopimelate (meso-DAP), a precursor of L-lysine and an essential component of the bacterial peptidoglycan. This is Diaminopimelate epimerase from Rickettsia akari (strain Hartford).